Here is a 345-residue protein sequence, read N- to C-terminus: Protein RecA (345 aa).

81–88 (GPESSGKT) contributes to the ATP binding site.

It belongs to the RecA family.

It is found in the cytoplasm. In terms of biological role, can catalyze the hydrolysis of ATP in the presence of single-stranded DNA, the ATP-dependent uptake of single-stranded DNA by duplex DNA, and the ATP-dependent hybridization of homologous single-stranded DNAs. It interacts with LexA causing its activation and leading to its autocatalytic cleavage. In Mycoplasma mycoides, this protein is Protein RecA.